Here is a 66-residue protein sequence, read N- to C-terminus: FMRFamide-like neuropeptides 24 (66 aa).

The signal sequence occupies residues 1 to 22 (MSRTSIILVLAIFVAIAAIAQC). Positions 23-48 (RNIQYDVDEISPEAAFRYAQWGEIPH) are excised as a propeptide. Residue Phe-61 is modified to Phenylalanine amide. A propeptide spanning residues 65-66 (SV) is cleaved from the precursor.

It belongs to the FARP (FMRFamide related peptide) family.

It localises to the secreted. Functionally, FMRFamides and FMRFamide-like peptides are neuropeptides. The sequence is that of FMRFamide-like neuropeptides 24 from Caenorhabditis briggsae.